The following is a 156-amino-acid chain: Phosphopantetheine adenylyltransferase (156 aa).

Belongs to the eukaryotic CoaD family.

It is found in the cytoplasm. The catalysed reaction is (R)-4'-phosphopantetheine + ATP + H(+) = 3'-dephospho-CoA + diphosphate. Its pathway is cofactor biosynthesis; coenzyme A biosynthesis. Reversibly transfers an adenylyl group from ATP to 4'-phosphopantetheine, yielding dephospho-CoA (dPCoA) and pyrophosphate. In Methanosarcina acetivorans (strain ATCC 35395 / DSM 2834 / JCM 12185 / C2A), this protein is Phosphopantetheine adenylyltransferase.